Here is a 270-residue protein sequence, read N- to C-terminus: Putative pyruvate, phosphate dikinase regulatory protein 2 (270 aa).

Position 151-158 (151-158) interacts with ADP; sequence GVSRTSKT.

It belongs to the pyruvate, phosphate/water dikinase regulatory protein family. PDRP subfamily.

It catalyses the reaction N(tele)-phospho-L-histidyl/L-threonyl-[pyruvate, phosphate dikinase] + ADP = N(tele)-phospho-L-histidyl/O-phospho-L-threonyl-[pyruvate, phosphate dikinase] + AMP + H(+). The enzyme catalyses N(tele)-phospho-L-histidyl/O-phospho-L-threonyl-[pyruvate, phosphate dikinase] + phosphate + H(+) = N(tele)-phospho-L-histidyl/L-threonyl-[pyruvate, phosphate dikinase] + diphosphate. Its function is as follows. Bifunctional serine/threonine kinase and phosphorylase involved in the regulation of the pyruvate, phosphate dikinase (PPDK) by catalyzing its phosphorylation/dephosphorylation. The chain is Putative pyruvate, phosphate dikinase regulatory protein 2 from Listeria welshimeri serovar 6b (strain ATCC 35897 / DSM 20650 / CCUG 15529 / CIP 8149 / NCTC 11857 / SLCC 5334 / V8).